Here is a 647-residue protein sequence, read N- to C-terminus: Threonine--tRNA ligase (647 aa).

A TGS domain is found at 1–61 (MIKITFPDGA…EEDGSIEIVT (61 aa)). Residues 240–538 (DHRKLGKELD…LIETYKGAFP (299 aa)) form a catalytic region. Residues Cys334, His385, and His515 each contribute to the Zn(2+) site.

Belongs to the class-II aminoacyl-tRNA synthetase family. In terms of assembly, homodimer. It depends on Zn(2+) as a cofactor.

The protein localises to the cytoplasm. The enzyme catalyses tRNA(Thr) + L-threonine + ATP = L-threonyl-tRNA(Thr) + AMP + diphosphate + H(+). Catalyzes the attachment of threonine to tRNA(Thr) in a two-step reaction: L-threonine is first activated by ATP to form Thr-AMP and then transferred to the acceptor end of tRNA(Thr). Also edits incorrectly charged L-seryl-tRNA(Thr). This chain is Threonine--tRNA ligase, found in Streptococcus pyogenes serotype M3 (strain ATCC BAA-595 / MGAS315).